The primary structure comprises 189 residues: Large ribosomal subunit protein bL9 (189 aa).

Belongs to the bacterial ribosomal protein bL9 family.

In terms of biological role, binds to the 23S rRNA. In Cereibacter sphaeroides (strain KD131 / KCTC 12085) (Rhodobacter sphaeroides), this protein is Large ribosomal subunit protein bL9.